We begin with the raw amino-acid sequence, 209 residues long: FMN-dependent NADH:quinone oxidoreductase (209 aa).

Residues Ser-10, 16 to 18 (SHS), and 98 to 101 (MWNF) each bind FMN.

It belongs to the azoreductase type 1 family. As to quaternary structure, homodimer. FMN is required as a cofactor.

It catalyses the reaction 2 a quinone + NADH + H(+) = 2 a 1,4-benzosemiquinone + NAD(+). It carries out the reaction N,N-dimethyl-1,4-phenylenediamine + anthranilate + 2 NAD(+) = 2-(4-dimethylaminophenyl)diazenylbenzoate + 2 NADH + 2 H(+). Quinone reductase that provides resistance to thiol-specific stress caused by electrophilic quinones. Its function is as follows. Also exhibits azoreductase activity. Catalyzes the reductive cleavage of the azo bond in aromatic azo compounds to the corresponding amines. In Nitratidesulfovibrio vulgaris (strain ATCC 29579 / DSM 644 / CCUG 34227 / NCIMB 8303 / VKM B-1760 / Hildenborough) (Desulfovibrio vulgaris), this protein is FMN-dependent NADH:quinone oxidoreductase.